A 61-amino-acid chain; its full sequence is Sperm protamine P1 (61 aa).

The segment at 1 to 61 (MARYRRRSRS…RRYSRRGRRR (61 aa)) is disordered.

It belongs to the protamine P1 family. Testis.

The protein resides in the nucleus. It localises to the chromosome. Protamines substitute for histones in the chromatin of sperm during the haploid phase of spermatogenesis. They compact sperm DNA into a highly condensed, stable and inactive complex. The sequence is that of Sperm protamine P1 (PRM1) from Dasyurus hallucatus (Northern quoll).